Consider the following 435-residue polypeptide: Ras association domain-containing protein 9 (435 aa).

Residues 1-22 (MAPFGRNLLKTRHKNRSPTKDM) form a disordered region. The Ras-associating domain maps to 25–119 (EEKEIVVWVC…MQFVLVKADA (95 aa)). Positions 195 to 290 (HTIHQQVKRM…DKLSAEIEKE (96 aa)) form a coiled coil. The disordered stretch occupies residues 380–435 (NRAKESEVPSSNGEIPPFTQRVFSNYTNDTDSDTGISSNHSQDSETTVGDVVLLST). Residues 400–426 (RVFSNYTNDTDSDTGISSNHSQDSETT) show a composition bias toward polar residues.

Interacts with PAM.

The protein localises to the endosome. Functionally, may play a role in regulating vesicuar trafficking in cells. In Homo sapiens (Human), this protein is Ras association domain-containing protein 9 (RASSF9).